The chain runs to 248 residues: Pyridoxine 5'-phosphate synthase (248 aa).

Position 10 (asparagine 10) interacts with 3-amino-2-oxopropyl phosphate. Residue 12 to 13 coordinates 1-deoxy-D-xylulose 5-phosphate; sequence DH. Arginine 21 contacts 3-amino-2-oxopropyl phosphate. Histidine 46 (proton acceptor) is an active-site residue. Arginine 48 and histidine 53 together coordinate 1-deoxy-D-xylulose 5-phosphate. Glutamate 73 functions as the Proton acceptor in the catalytic mechanism. Threonine 103 contacts 1-deoxy-D-xylulose 5-phosphate. The Proton donor role is filled by histidine 194. 3-amino-2-oxopropyl phosphate contacts are provided by residues glycine 195 and 216 to 217; that span reads GH.

Belongs to the PNP synthase family. As to quaternary structure, homooctamer; tetramer of dimers.

The protein localises to the cytoplasm. It carries out the reaction 3-amino-2-oxopropyl phosphate + 1-deoxy-D-xylulose 5-phosphate = pyridoxine 5'-phosphate + phosphate + 2 H2O + H(+). It functions in the pathway cofactor biosynthesis; pyridoxine 5'-phosphate biosynthesis; pyridoxine 5'-phosphate from D-erythrose 4-phosphate: step 5/5. In terms of biological role, catalyzes the complicated ring closure reaction between the two acyclic compounds 1-deoxy-D-xylulose-5-phosphate (DXP) and 3-amino-2-oxopropyl phosphate (1-amino-acetone-3-phosphate or AAP) to form pyridoxine 5'-phosphate (PNP) and inorganic phosphate. In Legionella pneumophila (strain Lens), this protein is Pyridoxine 5'-phosphate synthase.